The chain runs to 303 residues: Mesenteric estrogen-dependent adipogenesis protein (303 aa).

Highly expressed in the visceral fat depot.

It localises to the cytoplasm. In terms of biological role, involved in processes that promote adipocyte differentiation, lipid accumulation, and glucose uptake in mature adipocytes. This Homo sapiens (Human) protein is Mesenteric estrogen-dependent adipogenesis protein (MEDAG).